Here is a 753-residue protein sequence, read N- to C-terminus: Serine/threonine-protein phosphatase with EF-hands 2 (753 aa).

In terms of domain architecture, IQ spans 21-46 (KAAALIQRWYRRYVARLEMRRRCTWS). A catalytic region spans residues 128 to 540 (ATALVEAFRL…PHIVQYQANK (413 aa)). Positions 179, 181, 208, and 240 each coordinate Mn(2+). The Proton donor role is filled by His-241. His-292 contributes to the Mn(2+) binding site. Disordered stretches follow at residues 318–382 (CKTR…GSLD) and 409–435 (VTGE…KPTQ). Positions 322–333 (QKSEKQMEEKRR) are enriched in basic and acidic residues. Low complexity predominate over residues 348–361 (LPESRSLPSSPLRL). The span at 366-377 (AQKTSRSSSIPC) shows a compositional bias: polar residues. His-488 contacts Mn(2+). 3 EF-hand domains span residues 568-603 (AHSS…VLHL), 652-687 (RNRS…FSSH), and 692-727 (ITDD…VEKS). Residues Asp-665, Asp-667, Ser-669, Glu-676, Asp-705, Asn-707, Asp-709, His-711, and Glu-716 each coordinate Ca(2+). A disordered region spans residues 732–753 (DASECPQATNAKDSGCSSPGAH). Positions 737 to 753 (PQATNAKDSGCSSPGAH) are enriched in polar residues.

Belongs to the PPP phosphatase family. The cofactor is Mn(2+). As to expression, retinal specific.

The protein localises to the cytoplasm. It localises to the cell projection. It is found in the cilium. The protein resides in the photoreceptor outer segment. Its subcellular location is the photoreceptor inner segment. The enzyme catalyses O-phospho-L-seryl-[protein] + H2O = L-seryl-[protein] + phosphate. It catalyses the reaction O-phospho-L-threonyl-[protein] + H2O = L-threonyl-[protein] + phosphate. Activated by calcium. In terms of biological role, may play a role in phototransduction. May dephosphorylate photoactivated rhodopsin. May function as a calcium sensing regulator of ionic currents, energy production or synaptic transmission. The protein is Serine/threonine-protein phosphatase with EF-hands 2 (PPEF2) of Homo sapiens (Human).